The sequence spans 152 residues: Snaclec agkisacutacin subunit A (152 aa).

Positions 1 to 23 (MGRFIFVSFGLLVVFLSLSGTAA) are cleaved as a signal peptide. The C-type lectin domain maps to 24–152 (DCSSGWSSYE…EQQDPFVCEA (129 aa)). Disulfide bonds link Cys25–Cys36, Cys53–Cys150, and Cys125–Cys142. Residues Ser64, Glu66, and Glu70 each contribute to the Ca(2+) site. Ca(2+) is bound at residue Glu151.

This sequence belongs to the snaclec family. In terms of assembly, heterodimer with subunit B of AaACP or agkisacutacin; disulfide-linked. In terms of tissue distribution, expressed by the venom gland.

The protein resides in the secreted. Its function is as follows. Anticoagulant protein which binds to the gamma-carboxyglutamic acid-domain regions of factors IX (F9) and factor X (F10) in the presence of calcium with a 1 to 1 stoichiometry. Also inhibits platelet aggregation by binding to platelet glycoprotein Ibalpha (GP1BA) and functioning as a blocker of von Willebrand factor (VWF). Is devoid of hemorrhagic and lethal activities. Possesses antithrombotic and thrombolytic activities. Also hydrolyzes the Aalpha-chain of fibrinogen (FGA). Does not affect the Bbeta-chain (FGB) and the gamma chain (FGG). The sequence is that of Snaclec agkisacutacin subunit A from Deinagkistrodon acutus (Hundred-pace snake).